The chain runs to 1065 residues: WD repeat-containing protein on Y chromosome (1065 aa).

8 WD repeats span residues 153 to 197 (EEVT…IRTA), 326 to 365 (RVPL…EPSA), 369 to 408 (GHNG…LLQT), 459 to 498 (THAA…RKII), 511 to 550 (IIDI…VVRN), 598 to 638 (FHTD…RRYS), 745 to 784 (KTGD…VPEA), and 828 to 867 (AHLK…LGTL). Positions 915-925 (PAKRAEVKAPE) are enriched in basic and acidic residues. Disordered stretches follow at residues 915-936 (PAKR…QTDD) and 1024-1065 (GSAL…QQSE). Over residues 926–936 (DRDEETAQTDD) the composition is skewed to acidic residues.

The sequence is that of WD repeat-containing protein on Y chromosome from Drosophila persimilis (Fruit fly).